Here is a 320-residue protein sequence, read N- to C-terminus: Olfactory receptor 2AT4 (320 aa).

At 1 to 31 (MDATACNESVDGSPVFYLLGIPSLPETFFLP) the chain is on the extracellular side. The N-linked (GlcNAc...) asparagine glycan is linked to Asn-7. Residues 32 to 52 (VFFIFLLFYLLILMGNALILV) form a helical membrane-spanning segment. At 53–62 (AVVAEPSLHK) the chain is on the cytoplasmic side. Residues 63-83 (PMYFFLINLSTLDILFTTTTV) traverse the membrane as a helical segment. At 84–102 (PKMLSLFLLGDRFLSFSSC) the chain is on the extracellular side. Cys-102 and Cys-184 are oxidised to a cystine. A helical transmembrane segment spans residues 103–123 (LLQMYLFQSFTCSEAFILVVM). At 124–145 (AYDRYVAICHPLHYPVLMNPQT) the chain is on the cytoplasmic side. The chain crosses the membrane as a helical span at residues 146–166 (NATLAASAWLTALLLPIPAVV). Residues 167-200 (RTSQMAYNSIAYIYHCFCDHLAVVQASCSDTTPQ) are Extracellular-facing. Residues 201-221 (TLMGFCIAMVVSFLPLLLVLL) traverse the membrane as a helical segment. Topologically, residues 222-245 (SYVHILASVLRISSLEGRAKAFST) are cytoplasmic. The chain crosses the membrane as a helical span at residues 246–266 (CSSHLLVVGTYYSSIAIAYVA). The Extracellular segment spans residues 267-276 (YRADLPLDFH). A helical transmembrane segment spans residues 277–297 (IMGNVVYAILTPILNPLIYTL). Topologically, residues 298–320 (RNRDVKAAITKIMSQDPGCDRSI) are cytoplasmic.

This sequence belongs to the G-protein coupled receptor 1 family. Detected in the keratinocytes of the epidermis (at protein level). Detected in hair follicles in proximal outer root sheath and hair matrix keratinocytes (at protein level).

It is found in the cell membrane. Its function is as follows. Olfactory receptor. Activated by the synthetic sandalwood odorant sandalore. Endogenous ligand is unknown. The activity of this receptor is probably mediated by G proteins which induce elevation of intracellular Ca(2+), a cAMP-dependent pathway and phosphorylation of MAPK1/ERK2, MAPK3/ERK1 and p38 MAPKs. Activation of OR2AT4 induces proliferation, migration, and re-epithelialization during wound-healing processes of keratinocytes. Stimulation of OR2AT4 by sandalore promotes hair growth by decreasing apoptosis and increasing production of the anagen-prolonging growth factor IGF1 as well as other pathways involving various kinases. This chain is Olfactory receptor 2AT4, found in Homo sapiens (Human).